The sequence spans 414 residues: Probable indole-3-pyruvate monooxygenase YUCCA1 (414 aa).

25–30 provides a ligand contact to FAD; the sequence is GAGPSG. 189–194 is an NADP(+) binding site; that stretch reads GCGNSG.

This sequence belongs to the FMO family. It depends on FAD as a cofactor. In terms of tissue distribution, expressed in the apical meristems and young floral primordia. Detected in the floral meristems and at the base of the floral organs.

It catalyses the reaction indole-3-pyruvate + NADPH + O2 + H(+) = (indol-3-yl)acetate + CO2 + NADP(+) + H2O. The protein operates within plant hormone metabolism; auxin biosynthesis. Functionally, involved in auxin biosynthesis, but not in the tryptamine or the CYP79B2/B3 branches. Catalyzes in vitro the N-oxidation of tryptamine to form N-hydroxyl tryptamine. Involved during embryogenesis and seedling development. Required for the formation of floral organs and vascular tissues. Belongs to the set of redundant YUCCA genes probably responsible for auxin biosynthesis in shoots. The polypeptide is Probable indole-3-pyruvate monooxygenase YUCCA1 (YUC1) (Arabidopsis thaliana (Mouse-ear cress)).